A 370-amino-acid chain; its full sequence is Nodulation protein Z (370 aa).

The region spanning 47–361 is the GT23 domain; the sequence is SSNDRFVVSR…NDPGRLILIE (315 aa).

Belongs to the glycosyltransferase 23 family.

Its function is as follows. Fucosyltransferase which adds the fucose moiety of the nod factor on its terminal reducing N-acetylglucosamine end. Uses GDP-fucose as the donor group. The sequence is that of Nodulation protein Z (nodZ) from Bradyrhizobium diazoefficiens (strain JCM 10833 / BCRC 13528 / IAM 13628 / NBRC 14792 / USDA 110).